A 716-amino-acid polypeptide reads, in one-letter code: Exocyst complex component 8 (716 aa).

Residue serine 15 is modified to Phosphoserine. The segment at 129–150 (GFLPGPAGVPREGSGTGEEGKQ) is disordered. Residues 173–273 (YLVYNGDLVE…WLEVLEETKR (101 aa)) form the PH domain. Over residues 275–284 (LSDKRRREQE) the composition is skewed to basic and acidic residues. Residues 275–319 (LSDKRRREQEEAAAPRAPPPVTSKGSNPFEDEDDEELATPEAEEE) are disordered. Residues 303-319 (FEDEDDEELATPEAEEE) show a composition bias toward acidic residues. Threonine 313 carries the post-translational modification Phosphothreonine.

The protein belongs to the EXO84 family. As to quaternary structure, the exocyst complex is composed of EXOC1, EXOC2, EXOC3, EXOC4, EXOC5, EXOC6, EXOC7 and EXOC8. Interacts (via PH domain) with GTP-bound RALA and RALB. Interacts with SH3BP1; required for the localization of both SH3BP1 and the exocyst to the leading edge of migrating cells.

It is found in the cytoplasm. It localises to the perinuclear region. The protein localises to the cell projection. The protein resides in the growth cone. Functionally, component of the exocyst complex involved in the docking of exocytic vesicles with fusion sites on the plasma membrane. This Mus musculus (Mouse) protein is Exocyst complex component 8 (Exoc8).